The chain runs to 139 residues: Putative nickel-responsive regulator (139 aa).

Ni(2+) is bound by residues His-76, His-87, His-89, and Cys-95.

This sequence belongs to the transcriptional regulatory CopG/NikR family. It depends on Ni(2+) as a cofactor.

Its function is as follows. Transcriptional regulator. The polypeptide is Putative nickel-responsive regulator (Rhodopseudomonas palustris (strain HaA2)).